A 975-amino-acid chain; its full sequence is Importin-11 (975 aa).

Residue Met-1 is modified to N-acetylmethionine. The region spanning Ala-28 to Glu-100 is the Importin N-terminal domain. HEAT repeat units lie at residues Arg-123–Ser-160, Gln-283–Ile-317, Val-318–Phe-356, Gln-422–Leu-459, Trp-473–Lys-509, Asp-511–Phe-548, Pro-555–Val-593, Gly-600–Ala-636, Asn-640–Asn-677, Pro-683–Glu-720, Gln-731–Cys-773, Gln-819–Ala-849, Leu-850–Glu-887, and Met-957–Gly-974. Phosphoserine is present on Ser-343.

Belongs to the importin beta family. As to quaternary structure, interacts with UBE2E3 and RPL12.

It is found in the cytoplasm. It localises to the nucleus. In terms of biological role, functions in nuclear protein import as nuclear transport receptor. Serves as receptor for nuclear localization signals (NLS) in cargo substrates. Is thought to mediate docking of the importin/substrate complex to the nuclear pore complex (NPC) through binding to nucleoporin and the complex is subsequently translocated through the pore by an energy requiring, Ran-dependent mechanism. At the nucleoplasmic side of the NPC, Ran binds to the importin, the importin/substrate complex dissociates and importin is re-exported from the nucleus to the cytoplasm where GTP hydrolysis releases Ran. The directionality of nuclear import is thought to be conferred by an asymmetric distribution of the GTP- and GDP-bound forms of Ran between the cytoplasm and nucleus. Mediates the nuclear import of RPL12, and of UBE2E3. The protein is Importin-11 (Ipo11) of Mus musculus (Mouse).